Here is a 175-residue protein sequence, read N- to C-terminus: Large ribosomal subunit protein uL18 (175 aa).

This sequence belongs to the universal ribosomal protein uL18 family. In terms of assembly, part of the 50S ribosomal subunit. Contacts the 5S and 23S rRNAs.

Functionally, this is one of the proteins that bind and probably mediate the attachment of the 5S RNA into the large ribosomal subunit, where it forms part of the central protuberance. In Methanoculleus marisnigri (strain ATCC 35101 / DSM 1498 / JR1), this protein is Large ribosomal subunit protein uL18.